Here is a 619-residue protein sequence, read N- to C-terminus: Dihydroxy-acid dehydratase (619 aa).

D81 contributes to the Mg(2+) binding site. Residue C122 coordinates [2Fe-2S] cluster. The Mg(2+) site is built by D123 and K124. The residue at position 124 (K124) is an N6-carboxylysine. Position 198 (C198) interacts with [2Fe-2S] cluster. Residue E494 participates in Mg(2+) binding. Catalysis depends on S520, which acts as the Proton acceptor.

It belongs to the IlvD/Edd family. Homodimer. [2Fe-2S] cluster serves as cofactor. Mg(2+) is required as a cofactor.

The catalysed reaction is (2R)-2,3-dihydroxy-3-methylbutanoate = 3-methyl-2-oxobutanoate + H2O. It carries out the reaction (2R,3R)-2,3-dihydroxy-3-methylpentanoate = (S)-3-methyl-2-oxopentanoate + H2O. It participates in amino-acid biosynthesis; L-isoleucine biosynthesis; L-isoleucine from 2-oxobutanoate: step 3/4. It functions in the pathway amino-acid biosynthesis; L-valine biosynthesis; L-valine from pyruvate: step 3/4. Functions in the biosynthesis of branched-chain amino acids. Catalyzes the dehydration of (2R,3R)-2,3-dihydroxy-3-methylpentanoate (2,3-dihydroxy-3-methylvalerate) into 2-oxo-3-methylpentanoate (2-oxo-3-methylvalerate) and of (2R)-2,3-dihydroxy-3-methylbutanoate (2,3-dihydroxyisovalerate) into 2-oxo-3-methylbutanoate (2-oxoisovalerate), the penultimate precursor to L-isoleucine and L-valine, respectively. The chain is Dihydroxy-acid dehydratase from Neisseria meningitidis serogroup C / serotype 2a (strain ATCC 700532 / DSM 15464 / FAM18).